The chain runs to 358 residues: 3-isopropylmalate dehydrogenase (358 aa).

An NAD(+)-binding site is contributed by glycine 79 to glutamate 92. Substrate-binding residues include arginine 100, arginine 110, arginine 139, and aspartate 227. The Mg(2+) site is built by aspartate 227, aspartate 251, and aspartate 255. An NAD(+)-binding site is contributed by glycine 285–asparagine 297.

The protein belongs to the isocitrate and isopropylmalate dehydrogenases family. LeuB type 1 subfamily. In terms of assembly, homodimer. The cofactor is Mg(2+). Mn(2+) serves as cofactor.

The protein localises to the cytoplasm. It carries out the reaction (2R,3S)-3-isopropylmalate + NAD(+) = 4-methyl-2-oxopentanoate + CO2 + NADH. It functions in the pathway amino-acid biosynthesis; L-leucine biosynthesis; L-leucine from 3-methyl-2-oxobutanoate: step 3/4. Its function is as follows. Catalyzes the oxidation of 3-carboxy-2-hydroxy-4-methylpentanoate (3-isopropylmalate) to 3-carboxy-4-methyl-2-oxopentanoate. The product decarboxylates to 4-methyl-2 oxopentanoate. This chain is 3-isopropylmalate dehydrogenase, found in Pseudoalteromonas translucida (strain TAC 125).